The primary structure comprises 343 residues: UDP-3-O-acylglucosamine N-acyltransferase (343 aa).

Histidine 239 acts as the Proton acceptor in catalysis.

It belongs to the transferase hexapeptide repeat family. LpxD subfamily. As to quaternary structure, homotrimer.

It carries out the reaction a UDP-3-O-[(3R)-3-hydroxyacyl]-alpha-D-glucosamine + a (3R)-hydroxyacyl-[ACP] = a UDP-2-N,3-O-bis[(3R)-3-hydroxyacyl]-alpha-D-glucosamine + holo-[ACP] + H(+). It participates in bacterial outer membrane biogenesis; LPS lipid A biosynthesis. Its function is as follows. Catalyzes the N-acylation of UDP-3-O-acylglucosamine using 3-hydroxyacyl-ACP as the acyl donor. Is involved in the biosynthesis of lipid A, a phosphorylated glycolipid that anchors the lipopolysaccharide to the outer membrane of the cell. The chain is UDP-3-O-acylglucosamine N-acyltransferase from Vibrio vulnificus (strain YJ016).